Reading from the N-terminus, the 271-residue chain is S-adenosylmethionine decarboxylase proenzyme (271 aa).

S121 acts as the Schiff-base intermediate with substrate; via pyruvic acid in catalysis. Position 121 is a pyruvic acid (Ser); by autocatalysis (S121). The Proton acceptor; for processing activity role is filled by H126. C149 serves as the catalytic Proton donor; for catalytic activity.

It belongs to the prokaryotic AdoMetDC family. Type 2 subfamily. Heterooctamer of four alpha and four beta chains arranged as a tetramer of alpha/beta heterodimers. The cofactor is pyruvate. Post-translationally, is synthesized initially as an inactive proenzyme. Formation of the active enzyme involves a self-maturation process in which the active site pyruvoyl group is generated from an internal serine residue via an autocatalytic post-translational modification. Two non-identical subunits are generated from the proenzyme in this reaction, and the pyruvate is formed at the N-terminus of the alpha chain, which is derived from the carboxyl end of the proenzyme. The post-translation cleavage follows an unusual pathway, termed non-hydrolytic serinolysis, in which the side chain hydroxyl group of the serine supplies its oxygen atom to form the C-terminus of the beta chain, while the remainder of the serine residue undergoes an oxidative deamination to produce ammonia and the pyruvoyl group blocking the N-terminus of the alpha chain.

It carries out the reaction S-adenosyl-L-methionine + H(+) = S-adenosyl 3-(methylsulfanyl)propylamine + CO2. It functions in the pathway amine and polyamine biosynthesis; S-adenosylmethioninamine biosynthesis; S-adenosylmethioninamine from S-adenosyl-L-methionine: step 1/1. Functionally, catalyzes the decarboxylation of S-adenosylmethionine to S-adenosylmethioninamine (dcAdoMet), the propylamine donor required for the synthesis of the polyamines spermine and spermidine from the diamine putrescine. This Clostridium beijerinckii (strain ATCC 51743 / NCIMB 8052) (Clostridium acetobutylicum) protein is S-adenosylmethionine decarboxylase proenzyme.